The following is a 225-amino-acid chain: Thymocyte nuclear protein 1 (225 aa).

Residues 1 to 47 (MSRPRKRLAGTSGSDKGLSGKRTKTENSGEALAKVEDSNPQKTSATK) are disordered. Positions 5 to 10 (RKRLAG) match the Nuclear localization signal motif. The span at 23–39 (TKTENSGEALAKVEDSN) shows a compositional bias: basic and acidic residues.

Phosphorylated.

Its subcellular location is the nucleus. Functionally, specifically binds 5-hydroxymethylcytosine (5hmC), suggesting that it acts as a specific reader of 5hmC. In Homo sapiens (Human), this protein is Thymocyte nuclear protein 1 (THYN1).